Consider the following 172-residue polypeptide: 6,7-dimethyl-8-ribityllumazine synthase (172 aa).

5-amino-6-(D-ribitylamino)uracil is bound by residues Phe24, 58 to 60 (ALE), and 82 to 84 (AVI). 87-88 (ET) is a (2S)-2-hydroxy-3-oxobutyl phosphate binding site. His90 serves as the catalytic Proton donor. Residue Asn115 coordinates 5-amino-6-(D-ribitylamino)uracil. Arg129 contributes to the (2S)-2-hydroxy-3-oxobutyl phosphate binding site. Residues 150 to 172 (ALDQLGDDDEDEEEDEDDEEERA) are disordered. The span at 154 to 172 (LGDDDEDEEEDEDDEEERA) shows a compositional bias: acidic residues.

The protein belongs to the DMRL synthase family.

It catalyses the reaction (2S)-2-hydroxy-3-oxobutyl phosphate + 5-amino-6-(D-ribitylamino)uracil = 6,7-dimethyl-8-(1-D-ribityl)lumazine + phosphate + 2 H2O + H(+). It functions in the pathway cofactor biosynthesis; riboflavin biosynthesis; riboflavin from 2-hydroxy-3-oxobutyl phosphate and 5-amino-6-(D-ribitylamino)uracil: step 1/2. Its function is as follows. Catalyzes the formation of 6,7-dimethyl-8-ribityllumazine by condensation of 5-amino-6-(D-ribitylamino)uracil with 3,4-dihydroxy-2-butanone 4-phosphate. This is the penultimate step in the biosynthesis of riboflavin. This Burkholderia multivorans (strain ATCC 17616 / 249) protein is 6,7-dimethyl-8-ribityllumazine synthase.